Consider the following 829-residue polypeptide: Probable beta-glucosidase H (829 aa).

An N-linked (GlcNAc...) asparagine glycan is attached at asparagine 13. Aspartate 225 is an active-site residue. Residues asparagine 304, asparagine 473, asparagine 602, asparagine 627, asparagine 664, and asparagine 749 are each glycosylated (N-linked (GlcNAc...) asparagine). The PA14 domain occupies 389–548 (RMLSNAVIHF…DPEQMVANAV (160 aa)).

This sequence belongs to the glycosyl hydrolase 3 family.

The protein localises to the secreted. The enzyme catalyses Hydrolysis of terminal, non-reducing beta-D-glucosyl residues with release of beta-D-glucose.. It functions in the pathway glycan metabolism; cellulose degradation. Its function is as follows. Beta-glucosidases are one of a number of cellulolytic enzymes involved in the degradation of cellulosic biomass. Catalyzes the last step releasing glucose from the inhibitory cellobiose. This chain is Probable beta-glucosidase H (bglH), found in Aspergillus fumigatus (strain CBS 144.89 / FGSC A1163 / CEA10) (Neosartorya fumigata).